The following is a 162-amino-acid chain: L-amino acid N-acetyltransferase AaaT (162 aa).

The 159-residue stretch at 4-162 (IVIRHAETRD…VDAYYMARVK (159 aa)) folds into the N-acetyltransferase domain.

Belongs to the acetyltransferase family.

The catalysed reaction is L-phenylalanine + acetyl-CoA = N-acetyl-L-phenylalanine + CoA + H(+). It carries out the reaction L-methionine + acetyl-CoA = N-acetyl-L-methionine + CoA + H(+). Catalyzes the N-acetylation of L-phenylalanine and L-methionine using acetyl-CoA as acetyl donor in vitro. Cannot accept L-tyrosine as substrate and propionyl-CoA, succinyl-CoA or (S)-methylmalonyl-CoA as acyl donors. Is also able to acetylate and thus detoxify several nonhydrolyzable aminoacyl adenylates, but not the processed form of the peptide-nucleotide antibiotic microcin C (McC). When overproduced, provides complete resistance to leucyl sulfamoyl adenylate (LSA) and partial resistance to alanyl sulfamoyl adenylate (ASA) and phenylalanyl sulfamoyl adenylate (FSA). Therefore, may protect bacteria from various toxic aminoacyl nucleotides, either exogenous or those generated inside the cell during normal metabolism. This chain is L-amino acid N-acetyltransferase AaaT, found in Escherichia coli (strain K12).